Consider the following 251-residue polypeptide: Enolase-phosphatase E1 (251 aa).

Aspartate 13 and glutamate 15 together coordinate Mg(2+). Substrate is bound by residues 137 to 138 (SS) and lysine 183. Residue aspartate 210 participates in Mg(2+) binding.

Belongs to the HAD-like hydrolase superfamily. MasA/MtnC family. In terms of assembly, monomer. The cofactor is Mg(2+).

The protein localises to the cytoplasm. It localises to the nucleus. It carries out the reaction 5-methylsulfanyl-2,3-dioxopentyl phosphate + H2O = 1,2-dihydroxy-5-(methylsulfanyl)pent-1-en-3-one + phosphate. Its pathway is amino-acid biosynthesis; L-methionine biosynthesis via salvage pathway; L-methionine from S-methyl-5-thio-alpha-D-ribose 1-phosphate: step 3/6. The protein operates within amino-acid biosynthesis; L-methionine biosynthesis via salvage pathway; L-methionine from S-methyl-5-thio-alpha-D-ribose 1-phosphate: step 4/6. Its function is as follows. Bifunctional enzyme that catalyzes the enolization of 2,3-diketo-5-methylthiopentyl-1-phosphate (DK-MTP-1-P) into the intermediate 2-hydroxy-3-keto-5-methylthiopentenyl-1-phosphate (HK-MTPenyl-1-P), which is then dephosphorylated to form the acireductone 1,2-dihydroxy-3-keto-5-methylthiopentene (DHK-MTPene). In Candida glabrata (strain ATCC 2001 / BCRC 20586 / JCM 3761 / NBRC 0622 / NRRL Y-65 / CBS 138) (Yeast), this protein is Enolase-phosphatase E1.